We begin with the raw amino-acid sequence, 441 residues long: tRNA modification GTPase MnmE (441 aa).

The (6S)-5-formyl-5,6,7,8-tetrahydrofolate site is built by arginine 21, glutamate 79, and lysine 118. In terms of domain architecture, TrmE-type G spans 214–370; that stretch reads GFKIAIVGKP…LEGYLKTQDT (157 aa). GTP contacts are provided by residues 224-229, 243-249, and 268-271; these read NVGKSS, SDEAGTT, and DTAG. Mg(2+) is bound by residues serine 228 and threonine 249. A (6S)-5-formyl-5,6,7,8-tetrahydrofolate-binding site is contributed by lysine 441.

This sequence belongs to the TRAFAC class TrmE-Era-EngA-EngB-Septin-like GTPase superfamily. TrmE GTPase family. In terms of assembly, homodimer. Heterotetramer of two MnmE and two MnmG subunits. K(+) is required as a cofactor.

The protein resides in the cytoplasm. Functionally, exhibits a very high intrinsic GTPase hydrolysis rate. Involved in the addition of a carboxymethylaminomethyl (cmnm) group at the wobble position (U34) of certain tRNAs, forming tRNA-cmnm(5)s(2)U34. The sequence is that of tRNA modification GTPase MnmE from Campylobacter concisus (strain 13826).